A 121-amino-acid polypeptide reads, in one-letter code: Large ribosomal subunit protein uL14 (121 aa).

The protein belongs to the universal ribosomal protein uL14 family. Part of the 50S ribosomal subunit. Forms a cluster with proteins L3 and L19. In the 70S ribosome, L14 and L19 interact and together make contacts with the 16S rRNA in bridges B5 and B8.

Binds to 23S rRNA. Forms part of two intersubunit bridges in the 70S ribosome. In Prochlorococcus marinus (strain SARG / CCMP1375 / SS120), this protein is Large ribosomal subunit protein uL14.